The following is a 148-amino-acid chain: MSTTPVQPLQSEPLMDSETGVAPQIEAPQVPEGPKKGIDEQIFDYFAEHPVQATAATLVGLYALGAVFKRPAAGARGQFFKGGFENKMGPSEALQILSLRDAGLTMNKLKGQHRKIMLLNHPDRGGSPYVATKINEAKSVLEKRGGLK.

Over residues 1–10 (MSTTPVQPLQ) the composition is skewed to polar residues. Residues 1-22 (MSTTPVQPLQSEPLMDSETGVA) are disordered. The Mitochondrial intermembrane portion of the chain corresponds to 1–50 (MSTTPVQPLQSEPLMDSETGVAPQIEAPQVPEGPKKGIDEQIFDYFAEHP). The helical transmembrane segment at 51 to 68 (VQATAATLVGLYALGAVF) threads the bilayer. At 69–148 (KRPAAGARGQ…SVLEKRGGLK (80 aa)) the chain is on the mitochondrial matrix side. Residues 92-148 (EALQILSLRDAGLTMNKLKGQHRKIMLLNHPDRGGSPYVATKINEAKSVLEKRGGLK) form the J domain.

This sequence belongs to the TIM14 family. In terms of assembly, heterodimer with PAM16. Component of the PAM complex, at least composed of mtHsp70, MGE1, TIM44, PAM16, PAM17 and PAM18.

The protein localises to the mitochondrion inner membrane. In terms of biological role, essential component of the PAM complex, a complex required for the translocation of transit peptide-containing proteins from the inner membrane into the mitochondrial matrix in an ATP-dependent manner. In the complex, it is required to stimulate activity of mtHSP70 (SSC1). In Yarrowia lipolytica (strain CLIB 122 / E 150) (Yeast), this protein is Mitochondrial import inner membrane translocase subunit TIM14 (PAM18).